We begin with the raw amino-acid sequence, 357 residues long: D-alanine--D-alanine ligase (357 aa).

The 195-residue stretch at 145–339 (KEVMLYHGIQ…YGDLVMDIVN (195 aa)) folds into the ATP-grasp domain. 172–225 (PFDFPVVVKPTSGGSSVGTHIIHNQEELESGLEDVFRFDNSAIVEEFTPGREFS) serves as a coordination point for ATP. Positions 294, 306, and 308 each coordinate Mg(2+).

This sequence belongs to the D-alanine--D-alanine ligase family. It depends on Mg(2+) as a cofactor. The cofactor is Mn(2+).

Its subcellular location is the cytoplasm. It carries out the reaction 2 D-alanine + ATP = D-alanyl-D-alanine + ADP + phosphate + H(+). It participates in cell wall biogenesis; peptidoglycan biosynthesis. Its function is as follows. Cell wall formation. This Lacticaseibacillus paracasei (strain ATCC 334 / BCRC 17002 / CCUG 31169 / CIP 107868 / KCTC 3260 / NRRL B-441) (Lactobacillus paracasei) protein is D-alanine--D-alanine ligase.